A 768-amino-acid chain; its full sequence is P-selectin (768 aa).

The N-terminal stretch at 1 to 41 is a signal peptide; the sequence is MAGCPKGSWTPRLRSVILGGAQLIWFSALISELVNQKEVAA. At 42 to 709 the chain is on the extracellular side; sequence WTYNYSTKAY…QAGTLTIQEA (668 aa). Residues 58 to 158 form the C-type lectin domain; the sequence is VFCRRHFTDL…PCFKRKRALC (101 aa). 21 disulfide bridges follow: C60–C158, C131–C150, C163–C174, C168–C183, C185–C194, C200–C244, C230–C257, C262–C306, C292–C319, C324–C368, C354–C381, C386–C430, C416–C443, C448–C492, C478–C505, C510–C554, C540–C567, C580–C624, C610–C637, C642–C686, and C672–C699. Ca(2+) is bound by residues E121, N123, and N124. An a carbohydrate-binding site is contributed by N123. Residues E133 and N146 each contribute to the a carbohydrate site. Positions 146 and 147 each coordinate Ca(2+). The region spanning 159-195 is the EGF-like domain; it reads YTASCQDMSCSNQGECIETIGSYTCSCYPGFYGPECE. 8 consecutive Sushi domains span residues 198–259, 260–321, 322–383, 384–445, 446–507, 508–569, 578–639, and 640–701; these read KECG…KCDA, VQCQ…TCEA, IACE…FCEA, LQCP…ECQA, VSCA…TCEA, IKCP…TCKG, VRCP…MCRA, and VKCS…TCQA. The N-linked (GlcNAc...) asparagine glycan is linked to N398. N603 carries an N-linked (GlcNAc...) asparagine glycan. N-linked (GlcNAc...) asparagine glycans are attached at residues N654, N661, and N679. Residues 710 to 733 form a helical membrane-spanning segment; sequence LTYLGGAVASTTGLAVGGTLLALL. Over 734–768 the chain is Cytoplasmic; sequence RKRLRKKDDGKCPLNPHSHLGTYGVFTNAAYDPTP. A lipid anchor (S-palmitoyl cysteine; alternate) is attached at C745. The S-stearoyl cysteine; alternate moiety is linked to residue C745. The Endocytosis signal motif lies at 756–759; sequence YGVF. The interval 759–768 is interaction with SNX17; it reads FTNAAYDPTP.

Belongs to the selectin/LECAM family. As to quaternary structure, interacts with SNX17. Interacts with SELPLG/PSGL1 and PODXL2 and mediates neutrophil adhesion and leukocyte rolling. This interaction requires the sialyl-Lewis X epitope of SELPLG and PODXL2, and specific tyrosine sulfation on SELPLG. Interacts (via C-type lectin domain) with alpha-IIb/beta3 integrin ITGA2B:ITGB3 and alpha-V/beta-3 integrin ITGAV:ITGB3. Interacts with alpha5/beta1 integrin ITGA5:ITGB1 and alpha4/beta1 integrin ITGA4:ITGB. Stored in the alpha-granules of platelets and Weibel-Palade bodies of endothelial cells. Upon cell activation by agonists, P-selectin is transported rapidly to the cell surface.

Its subcellular location is the cell membrane. Ca(2+)-dependent receptor for myeloid cells that binds to carbohydrates on neutrophils and monocytes. Mediates the interaction of activated endothelial cells or platelets with leukocytes. The ligand recognized is sialyl-Lewis X. Mediates rapid rolling of leukocyte rolling over vascular surfaces during the initial steps in inflammation through interaction with SELPLG. Mediates cell-cell interactions and cell adhesion via the interaction with integrin alpha-IIb/beta3 (ITGA2B:ITGB3) and integrin alpha-V/beta-3 (ITGAV:ITGB3). The sequence is that of P-selectin (Selp) from Mus musculus (Mouse).